A 152-amino-acid polypeptide reads, in one-letter code: Interleukin-3 (152 aa).

A signal peptide spans 1–19 (MSCLPVLLLLQLLVSPGLQ). 2 N-linked (GlcNAc...) asparagine glycosylation sites follow: asparagine 34 and asparagine 89. An intrachain disulfide couples cysteine 35 to cysteine 103.

It belongs to the IL-3 family. As to quaternary structure, monomer. As to expression, activated T-cells, mast cells, natural killer cells.

Its subcellular location is the secreted. Granulocyte/macrophage colony-stimulating factors are cytokines that act in hematopoiesis by controlling the production, differentiation, and function of 2 related white cell populations of the blood, the granulocytes and the monocytes-macrophages. Its function is as follows. This CSF induces granulocytes, macrophages, mast cells, stem cells, erythroid cells, eosinophils and megakaryocytes. The polypeptide is Interleukin-3 (IL3) (Hylobates lar (Lar gibbon)).